A 222-amino-acid polypeptide reads, in one-letter code: Pyridoxine/pyridoxamine 5'-phosphate oxidase (222 aa).

FMN-binding positions include 69-74 (RMVLLK), 84-85 (YT), K91, and Q113. A substrate-binding site is contributed by K74. The substrate site is built by Y131, R135, and S139. Residues 148 to 149 (QS) and W193 each bind FMN. 199–201 (RLH) is a substrate binding site. R203 lines the FMN pocket.

This sequence belongs to the pyridoxamine 5'-phosphate oxidase family. In terms of assembly, homodimer. The cofactor is FMN.

It catalyses the reaction pyridoxamine 5'-phosphate + O2 + H2O = pyridoxal 5'-phosphate + H2O2 + NH4(+). It carries out the reaction pyridoxine 5'-phosphate + O2 = pyridoxal 5'-phosphate + H2O2. The protein operates within cofactor metabolism; pyridoxal 5'-phosphate salvage; pyridoxal 5'-phosphate from pyridoxamine 5'-phosphate: step 1/1. Its pathway is cofactor metabolism; pyridoxal 5'-phosphate salvage; pyridoxal 5'-phosphate from pyridoxine 5'-phosphate: step 1/1. Its function is as follows. Catalyzes the oxidation of either pyridoxine 5'-phosphate (PNP) or pyridoxamine 5'-phosphate (PMP) into pyridoxal 5'-phosphate (PLP). This Maricaulis maris (strain MCS10) (Caulobacter maris) protein is Pyridoxine/pyridoxamine 5'-phosphate oxidase.